A 539-amino-acid chain; its full sequence is MAVCARLCGVGPSRGCRRRQQRRGPAETAAADSEPDTDPEEERIEASAGVGGGLCAGPSPPPPRCSLLELPPELLVEIFASLPGTDLPSLAQVCTKFRRILHTDTIWRRRCREEYGVCENLRKLEITGVSCRDVYAKLLHRYRHILGLWQPDIGPYGGLLNVVVDGLFIIGWMYLPPHDPHVDDPMRFKPLFRIHLMERKAATVECMYGHKGPHHGHIQIVKKDEFSTKCNQTDHHRMSGGRQEEFRTWLREEWGRTLEDIFHEHMQELILMKFIYTSQYDNCLTYRRIYLPPSRPDDLIKPGLFKGTYGSHGLEIVMLSFHGRRARGTKITGDPNIPAGQQTVEIDLRHRIQLPDLENQRNFNELSRIVLEVRERVRQEQQEGGHEAGEGRGRQGPRESQPSPAQPRAEAPSKGPDGTPGEDGGEPGDAVAAAEQPAQCGQGQPFVLPVGVSSRNEDYPRTCRMCFYGTGLIAGHGFTSPERTPGVFILFDEDRFGFVWLELKSFSLYSRVQATFRNADAPSPQAFDEMLKNIQSLTS.

A disordered region spans residues 11–53; the sequence is GPSRGCRRRQQRRGPAETAAADSEPDTDPEEERIEASAGVGGG. Phosphoserine is present on Ser-33. Ser-33 is modified (phosphoserine; by PKB/AKT1). Residues 33-43 are compositionally biased toward acidic residues; that stretch reads SEPDTDPEEER. Position 37 is a phosphothreonine (Thr-37). A D box motif is present at residues 64–69; the sequence is RCSLLE. The F-box domain maps to 64 to 110; the sequence is RCSLLELPPELLVEIFASLPGTDLPSLAQVCTKFRRILHTDTIWRRR. Zn(2+)-binding residues include Cys-206, His-214, Cys-230, and His-236. Residue Ser-278 is modified to Phosphoserine; by ATM. A DDL motif motif is present at residues 297-299; the sequence is DDL. A compositionally biased stretch (basic and acidic residues) spans 377-397; sequence VRQEQQEGGHEAGEGRGRQGP. Residues 377-446 form a disordered region; it reads VRQEQQEGGH…PAQCGQGQPF (70 aa). Thr-419 is modified (phosphothreonine; by MTOR). Ser-480 is subject to Phosphoserine.

It belongs to the FBXO31 family. Part of a SCF (SKP1-cullin-F-box) protein ligase complex SCF(FBXO31) composed of CUL1, SKP1, RBX1 and FBXO31. Interacts (when phosphorylated at Ser-33) with CDC20, promoting ubiquitination by the APC/C complex. Post-translationally, phosphorylation at Ser-278 by ATM following gamma-irradiation results in its stabilization. Phosphorylation at Thr-419 and Ser-480 in absence of stress promotes its ubiquitination and degradation by the SCF(FBXO46) complex. Phosphorylation at Ser-33 by AKT1 promotes association with CDC20 and ubiquitination by the APC/C complex. In terms of processing, ubiquitinated by the SCF(FBXO46) complex in absence of stress, promoting its degradation. Ubiquitinated by the APC/C complex following phosphorylation at Ser-33, leading to its degradation by the proteasome. In terms of tissue distribution, highly expressed in brain. Expressed at moderate levels in most tissues, except bone marrow.

It is found in the cytoplasm. The protein localises to the cytoskeleton. The protein resides in the microtubule organizing center. It localises to the centrosome. It participates in protein modification; protein ubiquitination. Functionally, substrate-recognition component of the SCF(FBXO31) protein ligase complex, which specifically mediates the ubiquitination of proteins amidated at their C-terminus in response to oxidative stress, leading to their degradation by the proteasome. FBXO31 specifically recognizes and binds C-terminal peptides bearing an amide: C-terminal amidation in response to oxidative stress takes place following protein fragmentation. The SCF(FBXO31) also plays a role in G1 arrest following DNA damage by mediating ubiquitination of phosphorylated cyclin-D1 (CCND1), promoting its degradation by the proteasome, resulting in G1 arrest. The SCF(FBXO31) complex is however not a major regulator of CCND1 stability during the G1/S transition. In response to genotoxic stress, the SCF(FBXO31) complex directs ubiquitination and degradation of phosphorylated MDM2, thereby promoting p53/TP53-mediated DNA damage response. SCF(FBXO31) complex is required for genomic integrity by catalyzing ubiquitination and degradation of cyclin-A (CCNA1 and/or CCNA2) during the G1 phase. In response to genotoxic stress, the SCF(FBXO31) complex directs ubiquitination and degradation of phosphorylated FBXO46 and MAP2K6. SCF(FBXO31) complex promotes ubiquitination and degradation of CDT1 during the G2 phase to prevent re-replication. The SCF(FBXO31) complex also mediates ubiquitination and degradation of DUSP6, OGT and PARD6A. This Homo sapiens (Human) protein is F-box only protein 31.